The primary structure comprises 546 residues: MSLPKAQILVVVTVGGSTNSAPILEICSILAARGHTIDFATLSGRQKLVDNYPFVKKVHIVGPAISAEEDEKHYILFSRWNWNTARGKRDIVKGKMAFDAFWPFTYRGLKEVITTTKPDFIFSDFHVEAALDVCNEFRLPHAVMWPQMPWLMMPQKYIPGQPGMQQRCLTSEHASIYDRLFEMTFLLRSAPFFLHWIFWTKAMRRKEGVAPRPRHSKPDYLVFMNNFYGMETPRDTPPLVHPVGPILADSYPALDGDIKSFVETHQKIALVAFGTHVILDDGKIFKIIDGLADAISSGVIDGVVWALSARSRGQLDTSIRVPSLHLSHLTIDQLFKNQDQAWHFATWVPQRSVLEHDSTIIFVTHAGPSSVNESIFHGVPMVAMGIFGDQMVTTLRLERSGVAVRLDKETFDAASLTTAIRTILLFDKESFQRNVKRMKRIAMVGSRKKHFAANVIEEHLYDWDGRFENSILDLKACSNRKRGFLQASNSKDMYPRGKELRPMHLQTPDVRMSWIKLNNIDVALLFFILLGIISWITRAAANMVRL.

A signal peptide spans 1 to 20 (MSLPKAQILVVVTVGGSTNS). Residues 517-537 (LNNIDVALLFFILLGIISWIT) form a helical membrane-spanning segment.

This sequence belongs to the glycosyltransferase 28 family.

It is found in the membrane. The protein operates within secondary metabolite biosynthesis. Functionally, UDP-glycosyltransferase; part of the gene cluster that mediates the biosynthesis of the gamma-pyrones fusapyrone (FPY) and deoxyfusapyrone (dFPY). FPY is an undecaketide and thus likely synthesized by the polyketide synthase FPY1 from acetyl-CoA functioning as starter unit and the addition of 10 malonyl-CoA extender units by successive Claisen-condensations. Next to this, FPY shares some rare features: C-glycosylated 4-deoxyglucose at C-3, a gem-dimethyl group at C-13, and an alpha-beta to beta-gamma double bond shift at C-20. During FPY biosynthesis mono-C-methyl groups are transferred to the tetra-, penta-, hexa- and heptaketide, while two C-methyl groups are transferred to the nonaketide, suggesting that the CMet domain is programmed to selectively catalyze two successive C-alpha-methylation reactions of the nonaketide, while other alpha-carbons are non- or mono-methylated only. While the origin of the 4'-deoxyglucose moiety remains opaque, its transfer to C-3 is most likely mediated by the C-glycosyltransferase FPY2. Next to this, the hydroxyl group present at C-33 and discriminating between FPY and dFPY, is likely to be installed by the cytochrome P450 monooxygenase FPY7. No putative function can be predicted for the remaining genes FPY3-FPY6. In Fusarium mangiferae (Mango malformation disease fungus), this protein is UDP-glycosyltransferase FPY2.